Reading from the N-terminus, the 187-residue chain is BLOC-1-related complex subunit 8 homolog (187 aa).

The tract at residues 165–187 (QSQHETANDTRQGYNDDANNDQD) is disordered.

It belongs to the BORCS8 family.

It is found in the lysosome membrane. Its function is as follows. May participate in the coupling of lysosomes to microtubule plus-end-directed kinesin motor. The chain is BLOC-1-related complex subunit 8 homolog from Nematostella vectensis (Starlet sea anemone).